The primary structure comprises 141 residues: ATP synthase epsilon chain (141 aa).

It belongs to the ATPase epsilon chain family. F-type ATPases have 2 components, CF(1) - the catalytic core - and CF(0) - the membrane proton channel. CF(1) has five subunits: alpha(3), beta(3), gamma(1), delta(1), epsilon(1). CF(0) has three main subunits: a, b and c.

It localises to the cell inner membrane. Functionally, produces ATP from ADP in the presence of a proton gradient across the membrane. The sequence is that of ATP synthase epsilon chain from Pseudomonas fluorescens (strain Pf0-1).